We begin with the raw amino-acid sequence, 369 residues long: DNA polymerase processivity factor (369 aa).

The tract at residues 345–369 (IGSRKRGPSSPPFEREGKLAKVINQ) is disordered.

The protein belongs to the herpesviridae DNA polymerase processivity factor family. In terms of assembly, interacts with the DNA polymerase catalytic subunit. Interacts with the origin-binding protein.

The protein resides in the host nucleus. Plays an essential role in viral DNA replication by acting as the polymerase accessory subunit. Associates with the viral polymerase to increase its processivity and forms high-affinity direct interactions with DNA. Facilitates the origin-binding protein UL9 loading onto DNA thus increasing its ability to assemble into a functional complex capable of unwinding duplex DNA. This chain is DNA polymerase processivity factor (MDV055), found in Gallus gallus (Chicken).